The chain runs to 391 residues: DNA replication and repair protein RecF (391 aa).

30-37 (GLNGQGKT) is a binding site for ATP.

This sequence belongs to the RecF family.

It is found in the cytoplasm. Functionally, the RecF protein is involved in DNA metabolism; it is required for DNA replication and normal SOS inducibility. RecF binds preferentially to single-stranded, linear DNA. It also seems to bind ATP. This chain is DNA replication and repair protein RecF, found in Kineococcus radiotolerans (strain ATCC BAA-149 / DSM 14245 / SRS30216).